The following is a 378-amino-acid chain: Protein RecA (378 aa).

Residue Gly-79–Thr-86 participates in ATP binding.

It belongs to the RecA family.

It localises to the cytoplasm. Its function is as follows. Can catalyze the hydrolysis of ATP in the presence of single-stranded DNA, the ATP-dependent uptake of single-stranded DNA by duplex DNA, and the ATP-dependent hybridization of homologous single-stranded DNAs. It interacts with LexA causing its activation and leading to its autocatalytic cleavage. The protein is Protein RecA of Streptococcus pyogenes serotype M49 (strain NZ131).